The sequence spans 420 residues: LanC-like protein 3 (420 aa).

The protein belongs to the LanC-like protein family.

This chain is LanC-like protein 3 (Lancl3), found in Mus musculus (Mouse).